A 300-amino-acid polypeptide reads, in one-letter code: Type II methyltransferase M.XycI (300 aa).

Residues 109-129 are disordered; sequence RGYRAPDKKNPARAMDVRPDT. Basic and acidic residues predominate over residues 112-127; sequence RAPDKKNPARAMDVRP.

Belongs to the N(4)/N(6)-methyltransferase family. N(4) subfamily.

It catalyses the reaction a 2'-deoxycytidine in DNA + S-adenosyl-L-methionine = an N(4)-methyl-2'-deoxycytidine in DNA + S-adenosyl-L-homocysteine + H(+). Functionally, a beta subtype methylase, recognizes the double-stranded sequence 5'-CCCGGG-3', methylates C-2 on both strands, and protects the DNA from cleavage by the XcyI endonuclease. In Xanthomonas campestris pv. cyanopsidis, this protein is Type II methyltransferase M.XycI (xcyIM).